A 301-amino-acid chain; its full sequence is Glycine--tRNA ligase alpha subunit (301 aa).

Belongs to the class-II aminoacyl-tRNA synthetase family. As to quaternary structure, tetramer of two alpha and two beta subunits.

It localises to the cytoplasm. The enzyme catalyses tRNA(Gly) + glycine + ATP = glycyl-tRNA(Gly) + AMP + diphosphate. The polypeptide is Glycine--tRNA ligase alpha subunit (Variovorax paradoxus (strain S110)).